The sequence spans 147 residues: Deoxyuridine 5'-triphosphate nucleotidohydrolase (147 aa).

Residues 67–69, asparagine 80, and 84–86 contribute to the substrate site; these read RSG and LID.

It belongs to the dUTPase family. It depends on Mg(2+) as a cofactor.

The catalysed reaction is dUTP + H2O = dUMP + diphosphate + H(+). Its pathway is pyrimidine metabolism; dUMP biosynthesis; dUMP from dCTP (dUTP route): step 2/2. In terms of biological role, this enzyme is involved in nucleotide metabolism: it produces dUMP, the immediate precursor of thymidine nucleotides and it decreases the intracellular concentration of dUTP so that uracil cannot be incorporated into DNA. The chain is Deoxyuridine 5'-triphosphate nucleotidohydrolase from Gloeobacter violaceus (strain ATCC 29082 / PCC 7421).